The chain runs to 337 residues: Biotin synthase (337 aa).

In terms of domain architecture, Radical SAM core spans 62–289 (NAVQLSTLIS…KAMVRLSAGR (228 aa)). Residues Cys-77, Cys-81, and Cys-84 each coordinate [4Fe-4S] cluster. Residues Cys-121, Cys-152, Cys-212, and Arg-284 each contribute to the [2Fe-2S] cluster site.

The protein belongs to the radical SAM superfamily. Biotin synthase family. As to quaternary structure, homodimer. The cofactor is [4Fe-4S] cluster. [2Fe-2S] cluster serves as cofactor.

The enzyme catalyses (4R,5S)-dethiobiotin + (sulfur carrier)-SH + 2 reduced [2Fe-2S]-[ferredoxin] + 2 S-adenosyl-L-methionine = (sulfur carrier)-H + biotin + 2 5'-deoxyadenosine + 2 L-methionine + 2 oxidized [2Fe-2S]-[ferredoxin]. It participates in cofactor biosynthesis; biotin biosynthesis; biotin from 7,8-diaminononanoate: step 2/2. Catalyzes the conversion of dethiobiotin (DTB) to biotin by the insertion of a sulfur atom into dethiobiotin via a radical-based mechanism. This chain is Biotin synthase, found in Nitrosomonas europaea (strain ATCC 19718 / CIP 103999 / KCTC 2705 / NBRC 14298).